We begin with the raw amino-acid sequence, 410 residues long: LL-diaminopimelate aminotransferase (410 aa).

Tyr-15 and Gly-42 together coordinate substrate. Residues Tyr-72, 108 to 109 (SK), Tyr-132, Asn-187, Tyr-218, and 246 to 248 (SFS) each bind pyridoxal 5'-phosphate. Positions 109, 132, and 187 each coordinate substrate. Lys-249 is subject to N6-(pyridoxal phosphate)lysine. The pyridoxal 5'-phosphate site is built by Arg-257 and Asn-292. Asn-292 and Arg-388 together coordinate substrate.

The protein belongs to the class-I pyridoxal-phosphate-dependent aminotransferase family. LL-diaminopimelate aminotransferase subfamily. As to quaternary structure, homodimer. Pyridoxal 5'-phosphate is required as a cofactor.

It catalyses the reaction (2S,6S)-2,6-diaminopimelate + 2-oxoglutarate = (S)-2,3,4,5-tetrahydrodipicolinate + L-glutamate + H2O + H(+). Its pathway is amino-acid biosynthesis; L-lysine biosynthesis via DAP pathway; LL-2,6-diaminopimelate from (S)-tetrahydrodipicolinate (aminotransferase route): step 1/1. In terms of biological role, involved in the synthesis of meso-diaminopimelate (m-DAP or DL-DAP), required for both lysine and peptidoglycan biosynthesis. Catalyzes the direct conversion of tetrahydrodipicolinate to LL-diaminopimelate. This is LL-diaminopimelate aminotransferase from Geobacter sulfurreducens (strain ATCC 51573 / DSM 12127 / PCA).